The sequence spans 461 residues: Phosphoglucosamine mutase (461 aa).

Ser-107 acts as the Phosphoserine intermediate in catalysis. 4 residues coordinate Mg(2+): Ser-107, Asp-254, Asp-256, and Asp-258. The residue at position 107 (Ser-107) is a Phosphoserine.

It belongs to the phosphohexose mutase family. It depends on Mg(2+) as a cofactor. Post-translationally, activated by phosphorylation.

The enzyme catalyses alpha-D-glucosamine 1-phosphate = D-glucosamine 6-phosphate. Functionally, catalyzes the conversion of glucosamine-6-phosphate to glucosamine-1-phosphate. This is Phosphoglucosamine mutase from Bifidobacterium longum subsp. infantis (strain ATCC 15697 / DSM 20088 / JCM 1222 / NCTC 11817 / S12).